A 339-amino-acid chain; its full sequence is Beta-ketoacyl-[acyl-carrier-protein] synthase III (339 aa).

Active-site residues include cysteine 121 and histidine 257. Residues glutamine 258 to arginine 262 form an ACP-binding region. Asparagine 288 is an active-site residue.

The protein belongs to the thiolase-like superfamily. FabH family. As to quaternary structure, homodimer.

Its subcellular location is the cytoplasm. The enzyme catalyses malonyl-[ACP] + propanoyl-CoA + H(+) = 3-oxopentanoyl-[ACP] + CO2 + CoA. It carries out the reaction 2-methylpropanoyl-CoA + malonyl-[ACP] + H(+) = 4-methyl-3-oxopentanoyl-[ACP] + CO2 + CoA. It catalyses the reaction malonyl-[ACP] + acetyl-CoA + H(+) = 3-oxobutanoyl-[ACP] + CO2 + CoA. The catalysed reaction is butanoyl-CoA + malonyl-[ACP] + H(+) = 3-oxohexanoyl-[ACP] + CO2 + CoA. It functions in the pathway lipid metabolism; fatty acid biosynthesis. Its function is as follows. Catalyzes the condensation reaction of fatty acid synthesis by the addition to an acyl acceptor of two carbons from malonyl-ACP. Catalyzes the first condensation reaction which initiates fatty acid synthesis and may therefore play a role in governing the total rate of fatty acid production. Possesses both acetoacetyl-ACP synthase and acetyl transacylase activities. Propionyl-CoA and isobutyryl-CoA were the two most preferred substrates, although acetyl-CoA and butyryl-CoA could also be accepted and elongated. Involved in the biosynthesis of R1128 polyketide. This Streptomyces lividans protein is Beta-ketoacyl-[acyl-carrier-protein] synthase III.